We begin with the raw amino-acid sequence, 392 residues long: Phosphoglycerate kinase (392 aa).

Substrate contacts are provided by residues 21 to 23 (DMN), R36, 59 to 62 (HLGR), R114, and R147. ATP is bound by residues K198, E320, and 346-349 (GGDT).

Belongs to the phosphoglycerate kinase family. In terms of assembly, monomer.

The protein localises to the cytoplasm. It catalyses the reaction (2R)-3-phosphoglycerate + ATP = (2R)-3-phospho-glyceroyl phosphate + ADP. The protein operates within carbohydrate degradation; glycolysis; pyruvate from D-glyceraldehyde 3-phosphate: step 2/5. In Neisseria meningitidis serogroup C / serotype 2a (strain ATCC 700532 / DSM 15464 / FAM18), this protein is Phosphoglycerate kinase.